The chain runs to 335 residues: ETS translocation variant 2 (335 aa).

Disordered regions lie at residues 94–138 (DPWS…SWSH) and 201–220 (GHQSPAFTTPSKSNKQSDRA). Polar residues predominate over residues 205 to 220 (PAFTTPSKSNKQSDRA). The ETS DNA-binding region spans 234–314 (IQLWQFLLEL…GGRKYTYRFG (81 aa)).

Belongs to the ETS family. As to expression, testis.

The protein localises to the nucleus. Functionally, binds to DNA sequences containing the consensus pentanucleotide 5'-CGGA[AT]-3'. This Mus musculus (Mouse) protein is ETS translocation variant 2 (Etv2).